The following is a 4303-amino-acid chain: Polycystin-1 (4303 aa).

Positions 1–23 (MPPAAPARLALALGLGLWLGALA) are cleaved as a signal peptide. Positions 24–67 (GGPGRGCGPCEPPCLCGPAPGAACRVNCSGRGLRTLGPALRIPA) constitute an LRRNT domain. Over 24 to 3074 (GGPGRGCGPC…VFPEPTADVN (3051 aa)) the chain is Extracellular. Residues Asn-50 and Asn-89 are each glycosylated (N-linked (GlcNAc...) asparagine). LRR repeat units lie at residues 68-91 (DATA…ANLS) and 92-113 (ALAE…IFAN). 2 N-linked (GlcNAc...) asparagine glycosylation sites follow: Asn-116 and Asn-121. The 54-residue stretch at 125–178 (NPFECDCGLAWLPRWAEEQQVRVVQPEAATCAGPGSLAGQPLLGIPLLDSGCGE) folds into the LRRCT domain. The 95-residue stretch at 177–271 (GEEYVACLPD…PTLLQHVFPA (95 aa)) folds into the WSC domain. An N-linked (GlcNAc...) asparagine glycan is attached at Asn-187. A PKD 1 domain is found at 272–359 (SPGATLVGPH…VQVEAAPAAL (88 aa)). The 117-residue stretch at 415-531 (GNGHCYRLVV…CSAPHSYVCE (117 aa)) folds into the C-type lectin domain. 2 cysteine pairs are disulfide-bonded: Cys-436–Cys-530 and Cys-508–Cys-522. Positions 616–635 (AGTPENGSEPESRSPDNRTQ) are disordered. Residues Asn-621 and Asn-632 are each glycosylated (N-linked (GlcNAc...) asparagine). One can recognise an LDL-receptor class A; atypical domain in the interval 638–671 (PACMPGGRWCPGANICLPLDASCHPQACANGCTS). 3 disulfides stabilise this stretch: Cys-640–Cys-653, Cys-647–Cys-665, and Cys-660–Cys-669. Residues 743-817 (LSANASSWLP…RHNLSCSFDV (75 aa)) enclose the PKD 2 domain. Asn-746, Asn-810, Asn-841, Asn-854, Asn-890, Asn-921, Asn-1004, Asn-1010, Asn-1034, Asn-1072, Asn-1113, Asn-1178, Asn-1194, Asn-1240, Asn-1269, Asn-1336, Asn-1348, Asn-1382, Asn-1450, Asn-1455, Asn-1474, Asn-1518, Asn-1541, Asn-1554, Asn-1563, Asn-1647, Asn-1661, Asn-1733, Asn-1791, Asn-1834, Asn-1867, and Asn-1880 each carry an N-linked (GlcNAc...) asparagine glycan. PKD domains lie at 855–928 (ATAT…RVTA), 935–1020 (LRAT…NRMQ), 1023–1129 (QVST…LPSV), 1127–1215 (PSVA…LRGL), 1213–1298 (RGLS…EVLR), 1294–1383 (LEVL…VGNV), 1382–1469 (NVTL…VLVT), 1468–1551 (VTSI…VRGL), 1550–1635 (GLVV…IEGL), 1634–1721 (GLQV…VGWL), 1719–1805 (GWLM…VSGL), 1807–1890 (IRAS…IVGL), 1889–1974 (GLVL…VSGL), 1977–2057 (PNCC…VLEV), and 2060–2148 (AVQY…ACRE). N-linked (GlcNAc...) asparagine glycosylation is found at Asn-1991, Asn-2050, Asn-2074, Asn-2125, Asn-2248, Asn-2353, Asn-2395, Asn-2412, Asn-2567, Asn-2578, Asn-2645, Asn-2718, Asn-2754, Asn-2841, Asn-2878, Asn-2925, Asn-2956, and Asn-2994. In terms of domain architecture, REJ spans 2146 to 2833 (CREPEVDVVL…QLIFLVDSNP (688 aa)). Residues 2862–3063 (PIERLASERA…SLFVPPSHVR (202 aa)) form the GAIN-B domain. Cys-3015 and Cys-3043 are disulfide-bonded. Positions 3015–3063 (CQYFSEEDMVWRTEGLLPLEETSPRQAVCLTRHLTAFGASLFVPPSHVR) are GPS. A helical membrane pass occupies residues 3075 to 3095 (YIVMLTCAVCLVTYMVMAAIL). The Cytoplasmic portion of the chain corresponds to 3096–3277 (HKLDQLDASR…DRPPRSRFTR (182 aa)). Residues 3118 to 3233 (FKYEILVKTG…EANGGLVEKE (116 aa)) enclose the PLAT domain. The chain crosses the membrane as a helical span at residues 3278–3298 (IQRATCCVLLICLFLGANAVW). The Extracellular portion of the chain corresponds to 3299–3323 (YGAVGDSAYSTGHVSRLSPLSVDTV). Residues 3324 to 3344 (AVGLVSSVVVYPVYLAILFLF) traverse the membrane as a helical segment. Residues 3345–3559 (RMSRSKVAGS…LPAWCASLAH (215 aa)) are Cytoplasmic-facing. Residues 3560-3580 (GLSLLLVAVAVAVSGWVGASF) traverse the membrane as a helical segment. Residues 3581–3582 (PP) are Extracellular-facing. Residues 3583–3603 (GVSVAWLLSSSASFLASFLGW) traverse the membrane as a helical segment. Residues 3604–3665 (EPLKVLLEAL…LAKEEARKVK (62 aa)) lie on the Cytoplasmic side of the membrane. Residues 3666–3686 (RLHGMLRSLLVYMLFLLVTLL) form a helical membrane-spanning segment. Residues 3687 to 3901 (ASYGDASCHG…RLSAGLSLPL (215 aa)) lie on the Extracellular side of the membrane. 3 N-linked (GlcNAc...) asparagine glycosylation sites follow: Asn-3738, Asn-3790, and Asn-3845. A helical transmembrane segment spans residues 3902–3922 (LTSVCLLLFAVHFAVAEARTW). Topologically, residues 3923-3935 (HREGRWRVLRLGA) are cytoplasmic. Residues 3936-3956 (WARWLLVALTAATALVRLAQL) form a helical membrane-spanning segment. At 3957-3984 (GAADRQWTRFVRGRPRRFTSFDQVAQLS) the chain is on the extracellular side. A helical membrane pass occupies residues 3985-4005 (SAARGLAASLLFLLLVKAAQQ). At 4006–4027 (LRFVRQWSVFGKTLCRALPELL) the chain is on the cytoplasmic side. The helical transmembrane segment at 4028-4048 (GVTLGLVVLGVAYAQLAILLV) threads the bilayer. Residues 4049–4090 (SSCVDSLWSVAQALLVLCPGTGLSTLCPAESWHLSPLLCVGL) are Extracellular-facing. Residues 4091-4110 (WALRLWGALRLGAVILRWRY) form a helical membrane-spanning segment. Over 4111–4303 (HALRGELYRP…AKNKVHPSST (193 aa)) the chain is Cytoplasmic. Disordered regions lie at residues 4160 to 4196 (PLPS…QLDG) and 4243 to 4303 (LHSL…PSST). Ser-4166 carries the phosphoserine; by PRKX; in vitro modification. Polar residues predominate over residues 4185–4195 (SHPSTSSSQLD). The stretch at 4220-4251 (EALLTQFDRLNQATEDVYQLEQQLHSLQGRRS) forms a coiled coil. Residues 4253–4269 (RAPAGSSRGPSPGLRPA) are compositionally biased toward low complexity. The span at 4292 to 4303 (LRAKNKVHPSST) shows a compositional bias: basic residues.

It belongs to the polycystin family. As to quaternary structure, component of the heterotetrameric polycystin channel complex with PKD2; the tetramer contains one PKD1 chain and three PKD2 chains. Interacts with PKD2; the interaction is required for ciliary localization. Interacts with PKD2L1. Interacts with PRKX; involved in differentiation and controlled morphogenesis of the kidney. Interacts (via extracellular domain) with WNT3A, WNT4, WNT5A and WNT9B. Interacts with DVL1 and DVL2. Interacts with NPHP1 (via SH3 domain). Interacts with BBS1, BBS4, BBS5 and TTC8. Interacts with RGS7. Interacts (via the PKD repeats in the N-terminal extracellular region) with EPCIP; the interaction is not dependent on N-glycosylation of either protein. N-glycosylated. Post-translationally, after synthesis, undergoes cleavage between Leu-3048 and Thr-3049 in the GPS region of the GAIN-B domain. Cleavage at the GPS region occurs through a cis-autoproteolytic mechanism involving an ester-intermediate via N-O acyl rearrangement. This process takes place in the early secretory pathway, depends on initial N-glycosylation, and requires the REJ domain. There is evidence that cleavage at GPS region is incomplete. Uncleaved and cleaved products may have different functions in vivo.

It localises to the cell membrane. The protein resides in the cell projection. The protein localises to the cilium. Its subcellular location is the endoplasmic reticulum. It is found in the golgi apparatus. It localises to the vesicle. The protein resides in the secreted. The protein localises to the extracellular exosome. Functionally, component of a heteromeric calcium-permeable ion channel formed by PKD1 and PKD2 that is activated by interaction between PKD1 and a Wnt family member, such as WNT3A and WNT9B. Both PKD1 and PKD2 are required for channel activity. Involved in renal tubulogenesis. Involved in fluid-flow mechanosensation by the primary cilium in renal epithelium. Acts as a regulator of cilium length, together with PKD2. The dynamic control of cilium length is essential in the regulation of mechanotransductive signaling. The cilium length response creates a negative feedback loop whereby fluid shear-mediated deflection of the primary cilium, which decreases intracellular cAMP, leads to cilium shortening and thus decreases flow-induced signaling. May be an ion-channel regulator. Involved in adhesive protein-protein and protein-carbohydrate interactions. Likely to be involved with polycystin-1-interacting protein 1 in the detection, sequestration and exocytosis of senescent mitochondria. This chain is Polycystin-1, found in Homo sapiens (Human).